The sequence spans 77 residues: Acyl carrier protein (77 aa).

The Carrier domain maps to 2-77 (STIEERVKKI…EAIDYVVSHQ (76 aa)). S37 is modified (O-(pantetheine 4'-phosphoryl)serine).

It belongs to the acyl carrier protein (ACP) family. In terms of processing, 4'-phosphopantetheine is transferred from CoA to a specific serine of apo-ACP by AcpS. This modification is essential for activity because fatty acids are bound in thioester linkage to the sulfhydryl of the prosthetic group.

Its subcellular location is the cytoplasm. It functions in the pathway lipid metabolism; fatty acid biosynthesis. Functionally, carrier of the growing fatty acid chain in fatty acid biosynthesis. The polypeptide is Acyl carrier protein (Oceanospirillum linum).